Consider the following 324-residue polypeptide: tRNA U34 carboxymethyltransferase (324 aa).

Residues Lys92, Trp106, Lys111, Gly131, 153 to 155 (DPS), Met197, Tyr201, and Arg316 each bind carboxy-S-adenosyl-L-methionine.

Belongs to the class I-like SAM-binding methyltransferase superfamily. CmoB family. In terms of assembly, homotetramer.

The catalysed reaction is carboxy-S-adenosyl-L-methionine + 5-hydroxyuridine(34) in tRNA = 5-carboxymethoxyuridine(34) in tRNA + S-adenosyl-L-homocysteine + H(+). Its function is as follows. Catalyzes carboxymethyl transfer from carboxy-S-adenosyl-L-methionine (Cx-SAM) to 5-hydroxyuridine (ho5U) to form 5-carboxymethoxyuridine (cmo5U) at position 34 in tRNAs. The sequence is that of tRNA U34 carboxymethyltransferase from Hahella chejuensis (strain KCTC 2396).